The chain runs to 206 residues: Protein-methionine-sulfoxide reductase heme-binding subunit MsrQ (206 aa).

A run of 6 helical transmembrane segments spans residues 10–30 (VFIA…SAVL), 42–62 (LGLG…LQKL), 75–95 (LGLW…VFVL), 110–130 (PYII…VTSN), 147–167 (LVYV…RADL), and 169–189 (EWAI…PPVM).

This sequence belongs to the MsrQ family. As to quaternary structure, heterodimer of a catalytic subunit (MsrP) and a heme-binding subunit (MsrQ). The cofactor is FMN. Heme b is required as a cofactor.

It localises to the cell inner membrane. In terms of biological role, part of the MsrPQ system that repairs oxidized periplasmic proteins containing methionine sulfoxide residues (Met-O), using respiratory chain electrons. Thus protects these proteins from oxidative-stress damage caused by reactive species of oxygen and chlorine generated by the host defense mechanisms. MsrPQ is essential for the maintenance of envelope integrity under bleach stress, rescuing a wide series of structurally unrelated periplasmic proteins from methionine oxidation. MsrQ provides electrons for reduction to the reductase catalytic subunit MsrP, using the quinone pool of the respiratory chain. The protein is Protein-methionine-sulfoxide reductase heme-binding subunit MsrQ of Pseudomonas fluorescens (strain SBW25).